The sequence spans 170 residues: Adenine phosphoribosyltransferase (170 aa).

It belongs to the purine/pyrimidine phosphoribosyltransferase family. As to quaternary structure, homodimer.

Its subcellular location is the cytoplasm. It carries out the reaction AMP + diphosphate = 5-phospho-alpha-D-ribose 1-diphosphate + adenine. The protein operates within purine metabolism; AMP biosynthesis via salvage pathway; AMP from adenine: step 1/1. Functionally, catalyzes a salvage reaction resulting in the formation of AMP, that is energically less costly than de novo synthesis. In Streptococcus pneumoniae (strain Taiwan19F-14), this protein is Adenine phosphoribosyltransferase.